The primary structure comprises 206 residues: Thiamine-phosphate synthase (206 aa).

Residues Q33–K37 and N65 each bind 4-amino-2-methyl-5-(diphosphooxymethyl)pyrimidine. Residues D66 and D85 each contribute to the Mg(2+) site. T104 lines the 4-amino-2-methyl-5-(diphosphooxymethyl)pyrimidine pocket. Residue T130 to T132 coordinates 2-[(2R,5Z)-2-carboxy-4-methylthiazol-5(2H)-ylidene]ethyl phosphate. A 4-amino-2-methyl-5-(diphosphooxymethyl)pyrimidine-binding site is contributed by K133. G166 contacts 2-[(2R,5Z)-2-carboxy-4-methylthiazol-5(2H)-ylidene]ethyl phosphate.

This sequence belongs to the thiamine-phosphate synthase family. Requires Mg(2+) as cofactor.

It catalyses the reaction 2-[(2R,5Z)-2-carboxy-4-methylthiazol-5(2H)-ylidene]ethyl phosphate + 4-amino-2-methyl-5-(diphosphooxymethyl)pyrimidine + 2 H(+) = thiamine phosphate + CO2 + diphosphate. The enzyme catalyses 2-(2-carboxy-4-methylthiazol-5-yl)ethyl phosphate + 4-amino-2-methyl-5-(diphosphooxymethyl)pyrimidine + 2 H(+) = thiamine phosphate + CO2 + diphosphate. The catalysed reaction is 4-methyl-5-(2-phosphooxyethyl)-thiazole + 4-amino-2-methyl-5-(diphosphooxymethyl)pyrimidine + H(+) = thiamine phosphate + diphosphate. The protein operates within cofactor biosynthesis; thiamine diphosphate biosynthesis; thiamine phosphate from 4-amino-2-methyl-5-diphosphomethylpyrimidine and 4-methyl-5-(2-phosphoethyl)-thiazole: step 1/1. Condenses 4-methyl-5-(beta-hydroxyethyl)thiazole monophosphate (THZ-P) and 2-methyl-4-amino-5-hydroxymethyl pyrimidine pyrophosphate (HMP-PP) to form thiamine monophosphate (TMP). In Flavobacterium psychrophilum (strain ATCC 49511 / DSM 21280 / CIP 103535 / JIP02/86), this protein is Thiamine-phosphate synthase.